Consider the following 156-residue polypeptide: Acanthoscurrin-1 (156 aa).

The N-terminal stretch at 1 to 23 (MAFRMKLVVCIVLLSTLAVMSSA) is a signal peptide. A Lysine amide modification is found at Lys155.

In terms of tissue distribution, expressed in hemocytes and secreted into the plasma following bacterial immune challenge.

It is found in the secreted. Functionally, antimicrobial protein. Strong activity against the Gram-negative bacterium E.coli SBS363 and yeast C.albicans. No detectable activity against the Gram-positive bacterium M.luteus. The polypeptide is Acanthoscurrin-1 (Acanthoscurria gomesiana (Tarantula spider)).